The primary structure comprises 409 residues: NADH-quinone oxidoreductase subunit D (409 aa).

The protein belongs to the complex I 49 kDa subunit family. As to quaternary structure, NDH-1 is composed of 14 different subunits. Subunits NuoB, C, D, E, F, and G constitute the peripheral sector of the complex.

The protein localises to the cell inner membrane. The enzyme catalyses a quinone + NADH + 5 H(+)(in) = a quinol + NAD(+) + 4 H(+)(out). NDH-1 shuttles electrons from NADH, via FMN and iron-sulfur (Fe-S) centers, to quinones in the respiratory chain. The immediate electron acceptor for the enzyme in this species is believed to be ubiquinone. Couples the redox reaction to proton translocation (for every two electrons transferred, four hydrogen ions are translocated across the cytoplasmic membrane), and thus conserves the redox energy in a proton gradient. The polypeptide is NADH-quinone oxidoreductase subunit D (Sulfurovum sp. (strain NBC37-1)).